The sequence spans 65 residues: Large ribosomal subunit protein bL35 (65 aa).

Disordered regions lie at residues 1–23 and 36–65; these read MPKL…GGFK and MTTK…MPYA. The segment covering 54 to 65 has biased composition (polar residues); that stretch reads DTTSLVQQMPYA.

The protein belongs to the bacterial ribosomal protein bL35 family.

The sequence is that of Large ribosomal subunit protein bL35 from Francisella tularensis subsp. tularensis (strain FSC 198).